The sequence spans 241 residues: MNKLMLQDLHNNLKRRIISHGGKPIEVENGMSERFSHKQDTVIKSWLWDVPGFRRWRVTRMDAGDKLQVLNSVAYPAYTNDKPILGIDILWFGLKRKLVAVLDFQPLVQEERYFCRYYKDLQILKNRFVDFNSQKTMKIYDSNKYFSPWVLLYNGSFDDLQCSLAKILDEFLHAYWQVDNNNSREYIKIIPSKVEQLHINYDIYSAERDPAHGLFKSYFGQTWADQFVREFLFPHSHLTAD.

The protein belongs to the HY2 family.

The enzyme catalyses 15,16-dihydrobiliverdin + oxidized 2[4Fe-4S]-[ferredoxin] = biliverdin IXalpha + reduced 2[4Fe-4S]-[ferredoxin] + 2 H(+). Its function is as follows. Catalyzes the two-electron reduction of biliverdin IX-alpha at the C15 methine bridge. This chain is 15,16-dihydrobiliverdin:ferredoxin oxidoreductase (pebA), found in Prochlorococcus marinus (strain SARG / CCMP1375 / SS120).